A 277-amino-acid chain; its full sequence is 3-methyl-2-oxobutanoate hydroxymethyltransferase (277 aa).

Mg(2+) contacts are provided by Asp43 and Asp82. 3-methyl-2-oxobutanoate-binding positions include Asp43 to Ser44, Asp82, and Lys112. Glu114 contacts Mg(2+). Glu181 acts as the Proton acceptor in catalysis.

Belongs to the PanB family. In terms of assembly, homodecamer; pentamer of dimers. Mg(2+) is required as a cofactor.

The protein resides in the cytoplasm. It catalyses the reaction 3-methyl-2-oxobutanoate + (6R)-5,10-methylene-5,6,7,8-tetrahydrofolate + H2O = 2-dehydropantoate + (6S)-5,6,7,8-tetrahydrofolate. Its pathway is cofactor biosynthesis; (R)-pantothenate biosynthesis; (R)-pantoate from 3-methyl-2-oxobutanoate: step 1/2. In terms of biological role, catalyzes the reversible reaction in which hydroxymethyl group from 5,10-methylenetetrahydrofolate is transferred onto alpha-ketoisovalerate to form ketopantoate. The chain is 3-methyl-2-oxobutanoate hydroxymethyltransferase from Listeria monocytogenes serotype 4b (strain CLIP80459).